Consider the following 491-residue polypeptide: Serine/threonine-protein kinase 3 (491 aa).

At Met-1 the chain carries N-acetylmethionine. The residue at position 15 (Ser-15) is a Phosphoserine; by PLK1. The Protein kinase domain occupies 27–278; sequence FDVLEKLGEG…ATQLLQHPFI (252 aa). ATP is bound by residues 33–41 and Lys-56; that span reads LGEGSYGSV. The residue at position 117 (Thr-117) is a Phosphothreonine; by PKB/AKT1. Asp-146 functions as the Proton acceptor in the catalytic mechanism. Mg(2+) is bound by residues Asn-151 and Asp-164. Residues Thr-174 and Thr-180 each carry the phosphothreonine; by autocatalysis modification. The stretch at 287–328 forms a coiled coil; the sequence is LRDLITEAMEIKAKRHEEQQRELEEEEENSDEDELDSHTMVK. The segment at 301–327 is disordered; it reads RHEEQQRELEEEEENSDEDELDSHTMV. The segment covering 309-321 has biased composition (acidic residues); that stretch reads LEEEEENSDEDEL. Residue Ser-316 is modified to Phosphoserine. Phosphothreonine; by autocatalysis occurs at positions 336 and 378. The tract at residues 370-392 is disordered; the sequence is EDEEEEDGTMKRNATSPQVQRPS. Residues 381 to 390 are compositionally biased toward polar residues; that stretch reads RNATSPQVQR. Position 384 is a phosphothreonine; by PKB/AKT1 (Thr-384). Ser-385 and Ser-444 each carry phosphoserine. One can recognise an SARAH domain in the interval 437-484; it reads FDFLKNLSLEELQMRLKALDPMMEREIEELRQRYTAKRQPILDAMDAK. The stretch at 442–475 forms a coiled coil; sequence NLSLEELQMRLKALDPMMEREIEELRQRYTAKRQ.

This sequence belongs to the protein kinase superfamily. STE Ser/Thr protein kinase family. STE20 subfamily. As to quaternary structure, homodimer; mediated via the coiled-coil region. Interacts with NORE1, which inhibits autoactivation. Interacts with and stabilizes SAV1. Interacts with RAF1, which prevents dimerization and phosphorylation. Interacts with RASSF1. Interacts (via SARAH domain) with isoform 1 of NEK2. Interacts with ESR1 only in the presence of SAV1. Interacts with PKB/AKT1. Forms a tripartite complex with MOBKL1B and STK38. Interacts with RASSF2 (via SARAH domain). Interacts with DLG5 (via PDZ domain 3). Interacts with LATS1; this interaction is inhibited in the presence of DLG5. Interacts with MARK3 in the presence of DLG5. Interacts with RASSF5; this interaction inhibits STK3 autoactivation through heterodimerization. Interacts (when phosphorylated) with SLMAP (via FHA domain); the interaction associates STK3 with the STRIPAK complex. The cofactor is Mg(2+). In terms of processing, autophosphorylated on two residues Thr-174 and Thr-180, leading to activation. Phosphorylation at Thr-117 and Thr-384 by PKB/AKT1, leads to inhibition of its: cleavage, kinase activity, autophosphorylation at Thr-180, binding to RASSF1 and nuclear translocation, and increase in its binding to RAF1. Phosphorylated at Ser-15 by PLK1, leading to activation. When autophosphorylated at Thr-180, recruits STRIPAK complex and promotes PP2A-mediated dephosphorylation and inactivation of STK3. Post-translationally, proteolytically cleaved by caspase-3 during apoptosis. Proteolytic cleavage results in kinase activation and nuclear translocation of the truncated form (MST1/N). Ubiquitinated by TRIM69; leading to its redistribution to the perinuclear cytoskeleton, where it is phosphorylated by PLK1 and subsequently activated. As to expression, expressed at high levels in adult kidney, skeletal and placenta tissues and at very low levels in adult heart, lung and brain tissues.

Its subcellular location is the cytoplasm. The protein resides in the nucleus. It is found in the cytoskeleton. The protein localises to the microtubule organizing center. It localises to the centrosome. It carries out the reaction L-seryl-[protein] + ATP = O-phospho-L-seryl-[protein] + ADP + H(+). It catalyses the reaction L-threonyl-[protein] + ATP = O-phospho-L-threonyl-[protein] + ADP + H(+). Inhibited by the C-terminal non-catalytic region. Activated by caspase-cleavage. Full activation also requires homodimerization and autophosphorylation of Thr-180, which are inhibited by the proto-oncogene product RAF1. Activated by RASSF1 which acts by preventing its dephosphorylation. When autophosphorylated at Thr-180, recruits STRIPAK complex and promotes PP2A-mediated dephosphorylation and inactivation of STK3. Functionally, stress-activated, pro-apoptotic kinase which, following caspase-cleavage, enters the nucleus and induces chromatin condensation followed by internucleosomal DNA fragmentation. Key component of the Hippo signaling pathway which plays a pivotal role in organ size control and tumor suppression by restricting proliferation and promoting apoptosis. The core of this pathway is composed of a kinase cascade wherein STK3/MST2 and STK4/MST1, in complex with its regulatory protein SAV1, phosphorylates and activates LATS1/2 in complex with its regulatory protein MOB1, which in turn phosphorylates and inactivates YAP1 oncoprotein and WWTR1/TAZ. Phosphorylation of YAP1 by LATS2 inhibits its translocation into the nucleus to regulate cellular genes important for cell proliferation, cell death, and cell migration. STK3/MST2 and STK4/MST1 are required to repress proliferation of mature hepatocytes, to prevent activation of facultative adult liver stem cells (oval cells), and to inhibit tumor formation. Phosphorylates NKX2-1. Phosphorylates NEK2 and plays a role in centrosome disjunction by regulating the localization of NEK2 to centrosome, and its ability to phosphorylate CROCC and CEP250. In conjunction with SAV1, activates the transcriptional activity of ESR1 through the modulation of its phosphorylation. Positively regulates RAF1 activation via suppression of the inhibitory phosphorylation of RAF1 on 'Ser-259'. Phosphorylates MOBKL1A and RASSF2. Phosphorylates MOBKL1B on 'Thr-74'. Acts cooperatively with MOBKL1B to activate STK38. This Homo sapiens (Human) protein is Serine/threonine-protein kinase 3.